Here is a 336-residue protein sequence, read N- to C-terminus: DNA repair protein RAD51 homolog B (336 aa).

Positions 45 to 74 constitute a HhH domain; the sequence is TVEAVAYAPKKELLNIKGISEAKAEKILAE. Position 124–131 (124–131) interacts with ATP; it reads GEFRTGKT. Positions 242-257 match the Nuclear export signal motif; the sequence is LARFLRMLLRLADEFG.

Belongs to the RecA family. RAD51 subfamily. Forms linear homooligomers, giving rise to a RAD51 nucleoprotein filament, which is essential for strand-pairing reactions during DNA recombination.

It localises to the nucleus. It is found in the cytoplasm. The protein localises to the chromosome. In terms of biological role, plays an important role in homologous strand exchange, a key step in DNA repair through homologous recombination (HR). Binds to single-stranded DNA in an ATP-dependent manner to form nucleoprotein filaments which are essential for the homology search and strand exchange. Catalyzes the recognition of homology and strand exchange between homologous DNA partners to form a joint molecule between a processed DNA break and the repair template. Recruited to resolve stalled replication forks during replication stress. Also involved in interstrand cross-link repair. The chain is DNA repair protein RAD51 homolog B (rad51-b) from Xenopus laevis (African clawed frog).